The primary structure comprises 144 residues: Neuritin-A (144 aa).

An N-terminal signal peptide occupies residues 1-27; sequence MGLKLSGRYIFLVLAVHLAYLLQAVKA. Serine 114 carries the GPI-anchor amidated serine lipid modification. Residues 115–144 constitute a propeptide, removed in mature form; that stretch reads AGAPGQRLLFPAFLPLLMVFLSTLFILVLQ.

The protein belongs to the neuritin family. Expressed in sensory regions of the brain including the visual, auditory and olfactory systems. Within the retina, only expressed in the retinal ganglion cells. Concentrated in axon tracts including retinal axons.

It is found in the cell membrane. Its function is as follows. Modulates postsynaptic dendritic arbor elaboration and synaptic maturation. The polypeptide is Neuritin-A (nrn1-a) (Xenopus laevis (African clawed frog)).